The primary structure comprises 922 residues: Dual serine/threonine and tyrosine protein kinase (922 aa).

In terms of domain architecture, Protein kinase spans 645-899 (PKLGRELGRG…PLLGIVEPSL (255 aa)). ATP is bound by residues 651-659 (LGRGQYGVV) and Lys-674. Asp-770 functions as the Proton acceptor in the catalytic mechanism.

It belongs to the protein kinase superfamily. Ser/Thr protein kinase family.

Its subcellular location is the cytoplasm. The protein localises to the cell membrane. It localises to the apical cell membrane. The protein resides in the basolateral cell membrane. It is found in the cell junction. The enzyme catalyses L-seryl-[protein] + ATP = O-phospho-L-seryl-[protein] + ADP + H(+). It catalyses the reaction L-threonyl-[protein] + ATP = O-phospho-L-threonyl-[protein] + ADP + H(+). The catalysed reaction is L-tyrosyl-[protein] + ATP = O-phospho-L-tyrosyl-[protein] + ADP + H(+). May act as a positive regulator of ERK phosphorylation downstream of fibroblast growth factor-receptor activation. May induce both caspase-dependent apoptosis and caspase-independent cell death. May play a role in the embryonic development. The sequence is that of Dual serine/threonine and tyrosine protein kinase from Tetraodon nigroviridis (Spotted green pufferfish).